The primary structure comprises 485 residues: Ribulose bisphosphate carboxylase large chain (485 aa).

Residues 1-2 (MS) constitute a propeptide that is removed on maturation. Pro-3 carries the N-acetylproline modification. N6,N6,N6-trimethyllysine is present on Lys-14. Residues Asn-123 and Thr-173 each contribute to the substrate site. The active-site Proton acceptor is the Lys-175. Residue Lys-177 participates in substrate binding. Residues Lys-201, Asp-203, and Glu-204 each contribute to the Mg(2+) site. Lys-201 is modified (N6-carboxylysine). Catalysis depends on His-294, which acts as the Proton acceptor. Positions 295, 327, and 379 each coordinate substrate.

It belongs to the RuBisCO large chain family. Type I subfamily. Heterohexadecamer of 8 large chains and 8 small chains; disulfide-linked. The disulfide link is formed within the large subunit homodimers. It depends on Mg(2+) as a cofactor. In terms of processing, the disulfide bond which can form in the large chain dimeric partners within the hexadecamer appears to be associated with oxidative stress and protein turnover.

It localises to the plastid. The protein localises to the chloroplast. It catalyses the reaction 2 (2R)-3-phosphoglycerate + 2 H(+) = D-ribulose 1,5-bisphosphate + CO2 + H2O. The catalysed reaction is D-ribulose 1,5-bisphosphate + O2 = 2-phosphoglycolate + (2R)-3-phosphoglycerate + 2 H(+). In terms of biological role, ruBisCO catalyzes two reactions: the carboxylation of D-ribulose 1,5-bisphosphate, the primary event in carbon dioxide fixation, as well as the oxidative fragmentation of the pentose substrate in the photorespiration process. Both reactions occur simultaneously and in competition at the same active site. This is Ribulose bisphosphate carboxylase large chain from Helianthus annuus (Common sunflower).